The sequence spans 541 residues: Light-independent protochlorophyllide reductase subunit B (541 aa).

Asp-36 provides a ligand contact to [4Fe-4S] cluster. Asp-287 serves as the catalytic Proton donor. Gly-422–Leu-423 provides a ligand contact to substrate.

The protein belongs to the ChlB/BchB/BchZ family. As to quaternary structure, protochlorophyllide reductase is composed of three subunits; BchL, BchN and BchB. Forms a heterotetramer of two BchB and two BchN subunits. [4Fe-4S] cluster is required as a cofactor.

The catalysed reaction is chlorophyllide a + oxidized 2[4Fe-4S]-[ferredoxin] + 2 ADP + 2 phosphate = protochlorophyllide a + reduced 2[4Fe-4S]-[ferredoxin] + 2 ATP + 2 H2O. The protein operates within porphyrin-containing compound metabolism; bacteriochlorophyll biosynthesis (light-independent). In terms of biological role, component of the dark-operative protochlorophyllide reductase (DPOR) that uses Mg-ATP and reduced ferredoxin to reduce ring D of protochlorophyllide (Pchlide) to form chlorophyllide a (Chlide). This reaction is light-independent. The NB-protein (BchN-BchB) is the catalytic component of the complex. The protein is Light-independent protochlorophyllide reductase subunit B of Rhodopseudomonas palustris (strain HaA2).